A 306-amino-acid polypeptide reads, in one-letter code: MAEKVAVLLGGTSAEREVSLLSGQAVLAGLKEAGIDAYGVDTKDFPVTQLKEQGFDKVFIALHGRGGEDGTLQGVLEFLQLPYTGSGVMASALTMDKLRTKLVWQALGLPISPYVALNRQQFETLSPEELVACVAKLGLPLIVKPSHEGSSVGMSKVDHASELQKALVEAFQHDSDVLIEKWLSGPEFTVAILGDEVLPSIRIQPPGVFYDYDAKYLSDKTQYFCPSGLSDESEQQLAALALQAYHALDCSGWGRVDVMQDRDGHFYLLEVNTSPGMTSHSLVPMAARQYGLSFSQLVARILMLAD.

Residues 101 to 303 (KLVWQALGLP…FSQLVARILM (203 aa)) enclose the ATP-grasp domain. 134–189 (VAKLGLPLIVKPSHEGSSVGMSKVDHASELQKALVEAFQHDSDVLIEKWLSGPEFT) contributes to the ATP binding site. Positions 257, 270, and 272 each coordinate Mg(2+).

The protein belongs to the D-alanine--D-alanine ligase family. Requires Mg(2+) as cofactor. Mn(2+) is required as a cofactor.

It localises to the cytoplasm. The catalysed reaction is 2 D-alanine + ATP = D-alanyl-D-alanine + ADP + phosphate + H(+). Its pathway is cell wall biogenesis; peptidoglycan biosynthesis. In terms of biological role, cell wall formation. In Yersinia pseudotuberculosis serotype O:1b (strain IP 31758), this protein is D-alanine--D-alanine ligase.